The primary structure comprises 124 residues: UPF0102 protein Noc_0355 (124 aa).

This sequence belongs to the UPF0102 family.

This Nitrosococcus oceani (strain ATCC 19707 / BCRC 17464 / JCM 30415 / NCIMB 11848 / C-107) protein is UPF0102 protein Noc_0355.